Consider the following 235-residue polypeptide: High mobility group protein 1.2 (235 aa).

Over residues 1–34 (MNSGYSANIFPSSSSPTLYQSHQLQPNPSATMYQ) the composition is skewed to polar residues. Residues 1–47 (MNSGYSANIFPSSSSPTLYQSHQLQPNPSATMYQATPRDMGKPPVRG) are disordered. 2 DNA-binding regions (HMG box) span residues 47–117 (GKTS…AAYG) and 135–203 (PKRA…RNYK).

This sequence belongs to the HMGB family.

It is found in the nucleus. The chain is High mobility group protein 1.2 (hmg-1.2) from Caenorhabditis elegans.